The chain runs to 554 residues: Transcription factor 7-like 1-A (554 aa).

The span at 1 to 11 (MPQLNSGGGDE) shows a compositional bias: gly residues. The segment at 1–61 (MPQLNSGGGD…SENHSSDSDS (61 aa)) is interaction with CTNNB1-A. Disordered regions lie at residues 1-73 (MPQL…REAF), 183-213 (GTPP…PYYP), and 391-475 (WSAR…LTTK). Basic and acidic residues-rich tracts occupy residues 17-32 (ELIR…EKSP) and 52-73 (SENH…REAF). The interval 109–312 (LGGHYLPNGA…SPNLHTKSNM (204 aa)) is interaction with AES and TLE4-A. The segment at residues 324–392 (IKKPLNAFML…LHSQLYPSWS (69 aa)) is a DNA-binding region (HMG box). The segment covering 407-416 (KQSPEMETHT) has biased composition (basic and acidic residues). Residues 408-554 (QSPEMETHTK…PLSLVTKSSD (147 aa)) are interaction with CTBP-B. Residues 445–464 (SPATPSAALASPAAPAATHS) show a composition bias toward low complexity. Positions 465-474 (EQAQPLSLTT) are enriched in polar residues.

It belongs to the TCF/LEF family. Interacts with csnk1e, ctnnb1-A, ctbp-B, dact1-A and gsk3b. May interact with ase and tle4-A. Phosphorylated. Phosphorylation by csnk1e promotes binding to ctnnb1-A while phosphorylation by gsk3b may reverse this effect.

The protein localises to the cytoplasm. The protein resides in the nucleus. Its function is as follows. Participates in the Wnt signaling pathway. Binds to DNA and acts as a repressor in the absence of ctnnb1-A and possibly ctnnb1-B, and as an activator in the presence of these proteins. Required early in development for the establishment of the dorsal body axis in response to maternal Wnt signaling. Also required during development of the CNS for the establishment of dorsal-ventral patterning in the prospective diencephalon. This chain is Transcription factor 7-like 1-A (tcf7l1-a), found in Xenopus laevis (African clawed frog).